Here is a 530-residue protein sequence, read N- to C-terminus: Pyridoxine/pyridoxamine 5'-phosphate oxidase 1, chloroplastic (530 aa).

The N-terminal 64 residues, 1–64 (MRNVIRRVTT…TLCTKVIIPN (64 aa)), are a transit peptide targeting the chloroplast. Met-65 carries the post-translational modification N-acetylmethionine. The region spanning 81 to 297 (AAEIDETLMG…SVAEKYKLEL (217 aa)) is the YjeF N-terminal domain. 131-135 (NNGGD) contacts (6S)-NADPHX. The K(+) site is built by Asn-132 and Asp-196. Residues 200–206 (GFSFHGA) and Asp-238 each bind (6S)-NADPHX. Ser-241 is a binding site for K(+). Pyridoxal 5'-phosphate is bound at residue 247–250 (EGDH). 321-324 (RVNY) contacts substrate. 325 to 327 (VSP) contacts pyridoxal 5'-phosphate. 374–377 (RMVL) is a binding site for FMN. Residue Lys-379 participates in pyridoxal 5'-phosphate binding. FMN is bound by residues 389 to 390 (FT), 395 to 396 (KK), and Gln-418. 3 residues coordinate pyridoxal 5'-phosphate: Tyr-436, Arg-440, and Ser-444. Residues 453–454 (QS) and Trp-499 contribute to the FMN site. A pyridoxal 5'-phosphate-binding site is contributed by 505–507 (RLH). An FMN-binding site is contributed by Arg-509.

In the N-terminal section; belongs to the NnrE/AIBP family. This sequence in the C-terminal section; belongs to the pyridoxamine 5'-phosphate oxidase family. In terms of assembly, homodimer. FMN serves as cofactor. K(+) is required as a cofactor. Expressed in leaves, stems, flowers and roots.

The protein resides in the plastid. The protein localises to the chloroplast. The catalysed reaction is pyridoxamine 5'-phosphate + O2 + H2O = pyridoxal 5'-phosphate + H2O2 + NH4(+). It carries out the reaction pyridoxine 5'-phosphate + O2 = pyridoxal 5'-phosphate + H2O2. The enzyme catalyses (6R)-NADHX = (6S)-NADHX. It catalyses the reaction (6R)-NADPHX = (6S)-NADPHX. It participates in cofactor metabolism; pyridoxal 5'-phosphate salvage; pyridoxal 5'-phosphate from pyridoxamine 5'-phosphate: step 1/1. It functions in the pathway cofactor metabolism; pyridoxal 5'-phosphate salvage; pyridoxal 5'-phosphate from pyridoxine 5'-phosphate: step 1/1. Functionally, catalyzes the oxidation of either pyridoxine 5'-phosphate (PNP) or pyridoxamine 5'-phosphate (PMP) into pyridoxal 5'-phosphate (PLP). Involved in the PLP salvage pathway. Has a higher preference for PNP over PMP. May also catalyze the epimerization of the S- and R-forms of NAD(P)HX, a damaged form of NAD(P)H that is a result of enzymatic or heat-dependent hydration. This is a prerequisite for the S-specific NAD(P)H-hydrate dehydratase to allow the repair of both epimers of NAD(P)HX. The protein is Pyridoxine/pyridoxamine 5'-phosphate oxidase 1, chloroplastic (PPOX1) of Arabidopsis thaliana (Mouse-ear cress).